A 232-amino-acid chain; its full sequence is Phosphatidylserine decarboxylase proenzyme (232 aa).

The active-site Schiff-base intermediate with substrate; via pyruvic acid is Ser-190. At Ser-190 the chain carries Pyruvic acid (Ser); by autocatalysis.

This sequence belongs to the phosphatidylserine decarboxylase family. PSD-A subfamily. As to quaternary structure, heterodimer of a large membrane-associated beta subunit and a small pyruvoyl-containing alpha subunit. Requires pyruvate as cofactor. Is synthesized initially as an inactive proenzyme. Formation of the active enzyme involves a self-maturation process in which the active site pyruvoyl group is generated from an internal serine residue via an autocatalytic post-translational modification. Two non-identical subunits are generated from the proenzyme in this reaction, and the pyruvate is formed at the N-terminus of the alpha chain, which is derived from the carboxyl end of the proenzyme. The post-translation cleavage follows an unusual pathway, termed non-hydrolytic serinolysis, in which the side chain hydroxyl group of the serine supplies its oxygen atom to form the C-terminus of the beta chain, while the remainder of the serine residue undergoes an oxidative deamination to produce ammonia and the pyruvoyl prosthetic group on the alpha chain.

The protein localises to the cell membrane. It catalyses the reaction a 1,2-diacyl-sn-glycero-3-phospho-L-serine + H(+) = a 1,2-diacyl-sn-glycero-3-phosphoethanolamine + CO2. It participates in phospholipid metabolism; phosphatidylethanolamine biosynthesis; phosphatidylethanolamine from CDP-diacylglycerol: step 2/2. Its function is as follows. Catalyzes the formation of phosphatidylethanolamine (PtdEtn) from phosphatidylserine (PtdSer). The protein is Phosphatidylserine decarboxylase proenzyme of Rhodopseudomonas palustris (strain BisB5).